Consider the following 261-residue polypeptide: Probable septum site-determining protein MinC (261 aa).

Residues 106–144 (RAPAAKPADEAEPAAVPAVETAAAPAAAAAPEQSSDPAP) form a disordered region. Over residues 118-144 (PAAVPAVETAAAPAAAAAPEQSSDPAP) the composition is skewed to low complexity.

This sequence belongs to the MinC family. In terms of assembly, interacts with MinD and FtsZ.

In terms of biological role, cell division inhibitor that blocks the formation of polar Z ring septums. Rapidly oscillates between the poles of the cell to destabilize FtsZ filaments that have formed before they mature into polar Z rings. Prevents FtsZ polymerization. This chain is Probable septum site-determining protein MinC, found in Burkholderia orbicola (strain MC0-3).